The following is a 587-amino-acid chain: Putative gustatory receptor 59b (587 aa).

Residues 1 to 4 (MPSY) lie on the Cytoplasmic side of the membrane. The chain crosses the membrane as a helical span at residues 5–25 (MAFTPYIMFSTNYAAIAYILI). At 26-62 (SRCYRDSMLLDLQRITLEVNREMLRTGKKMNSLIRRM) the chain is on the extracellular side. The helical transmembrane segment at 63–83 (FFLKTFTLTYSCLSYILAVLV) threads the bilayer. Over 84-97 (YQWRAQNWSNLFNG) the chain is Cytoplasmic. The chain crosses the membrane as a helical span at residues 98–118 (LLVNISLTILVVTTFFYFVSL). The Extracellular portion of the chain corresponds to 119-277 (MHVARGFDFV…CGLYPVNKAK (159 aa)). A glycan (N-linked (GlcNAc...) asparagine) is linked at Asn-159. The helical transmembrane segment at 278–298 (WLEMVASIVVHSIMLFQFHLV) threads the bilayer. Topologically, residues 299-309 (MRGGYTTLFSR) are cytoplasmic. Residues 310–330 (TYALLANIITLTMLPIVMWQV) traverse the membrane as a helical segment. Over 331 to 403 (RSVFLAKRHY…GIDGVRRSLR (73 aa)) the chain is Extracellular. Residues 404–424 (ILLFVKFFTLSWLCITDIIFL) form a helical membrane-spanning segment. The Cytoplasmic portion of the chain corresponds to 425 to 518 (FYSSDAVIWV…IYAPQMLATR (94 aa)). The chain crosses the membrane as a helical span at residues 519–539 (FDHFVIGVIQAYWGAVFTFDL). The Extracellular portion of the chain corresponds to 540–587 (STSFLWVVYGSVQYHVRSLDYYLIDYMCDVAVEYHDSARHSWSEKECY).

It belongs to the insect chemoreceptor superfamily. Gustatory receptor (GR) family. Gr22e subfamily.

Its subcellular location is the cell membrane. Probable gustatory receptor which mediates acceptance or avoidance behavior, depending on its substrates. This Drosophila erecta (Fruit fly) protein is Putative gustatory receptor 59b.